Here is a 291-residue protein sequence, read N- to C-terminus: tRNA pseudouridine synthase-like 1 (291 aa).

The active-site Nucleophile is Asp66. Tyr130 is a binding site for substrate.

The protein belongs to the tRNA pseudouridine synthase TruA family.

The catalysed reaction is a uridine in tRNA = a pseudouridine in tRNA. In Mus musculus (Mouse), this protein is tRNA pseudouridine synthase-like 1 (Pusl1).